A 407-amino-acid polypeptide reads, in one-letter code: Protein trichome birefringence-like 12 (407 aa).

A helical; Signal-anchor for type II membrane protein transmembrane segment spans residues 21 to 41 (SLLPRILLLSLLLLLFYSLIL). Residues 130–132 (GDS) carry the GDS motif motif. The short motif at 379-393 (DCMHWCLPGVPDTWV) is the DCXHWCLPGXXDXWN motif element.

It belongs to the PC-esterase family. TBL subfamily.

The protein resides in the membrane. May act as a bridging protein that binds pectin and other cell wall polysaccharides. Probably involved in maintaining esterification of pectins. May be involved in the specific O-acetylation of cell wall polymers. The chain is Protein trichome birefringence-like 12 (TBL12) from Arabidopsis thaliana (Mouse-ear cress).